The sequence spans 295 residues: 2-dehydropantoate 2-reductase (295 aa).

NADP(+) is bound by residues 9 to 14 (GPGAVG), N100, and A126. N100 lines the substrate pocket. K177 functions as the Proton donor in the catalytic mechanism. The substrate site is built by N181 and S246. Residue E258 coordinates NADP(+).

It belongs to the ketopantoate reductase family.

It is found in the cytoplasm. The catalysed reaction is (R)-pantoate + NADP(+) = 2-dehydropantoate + NADPH + H(+). The protein operates within cofactor biosynthesis; (R)-pantothenate biosynthesis; (R)-pantoate from 3-methyl-2-oxobutanoate: step 2/2. In terms of biological role, catalyzes the NADPH-dependent reduction of ketopantoate into pantoic acid. This Mycobacterium tuberculosis (strain CDC 1551 / Oshkosh) protein is 2-dehydropantoate 2-reductase.